Consider the following 141-residue polypeptide: Large ribosomal subunit protein uL11A (141 aa).

The protein belongs to the universal ribosomal protein uL11 family. Part of the ribosomal stalk of the 50S ribosomal subunit. Interacts with L10 and the large rRNA to form the base of the stalk. L10 forms an elongated spine to which L12 dimers bind in a sequential fashion forming a multimeric L10(L12)X complex. Post-translationally, one or more lysine residues are methylated.

In terms of biological role, forms part of the ribosomal stalk which helps the ribosome interact with GTP-bound translation factors. The protein is Large ribosomal subunit protein uL11A of Halalkalibacterium halodurans (strain ATCC BAA-125 / DSM 18197 / FERM 7344 / JCM 9153 / C-125) (Bacillus halodurans).